Reading from the N-terminus, the 474-residue chain is Mitochondrial import inner membrane translocase subunit TIM44-1 (474 aa).

Residues 1–54 constitute a mitochondrion transit peptide; that stretch reads MAIRKIIRDLLITKQPLLRQLFHQRVLRANARSEFLPAIGYTSHRRFSVFTEFS. Residues 68 to 88 adopt a coiled-coil conformation; it reads ERTVKELKERTEEFKGVTEDL. Basic and acidic residues predominate over residues 132 to 143; it reads VKESFKLGKEEN. A disordered region spans residues 132–165; sequence VKESFKLGKEENAESASSSGTRASQGEKQQSGST. Residues 145 to 165 are compositionally biased toward polar residues; sequence ESASSSGTRASQGEKQQSGST.

This sequence belongs to the Tim44 family. In terms of assembly, probable component of the PAM complex at least composed of a mitochondrial HSP70 protein, TIMM44 and TIMM14. The complex interacts with the TIMM23 component of the TIM17:23 complex. As to expression, expressed in roots, flowers, young cotyledons and leaves.

It is found in the mitochondrion inner membrane. Essential component of the PAM complex, a complex required for the translocation of transit peptide-containing proteins from the inner membrane into the mitochondrial matrix in an ATP-dependent manner. Recruits mitochondrial HSP70 to drive protein translocation into the matrix using ATP as an energy source. In Arabidopsis thaliana (Mouse-ear cress), this protein is Mitochondrial import inner membrane translocase subunit TIM44-1 (TIM44-1).